A 304-amino-acid chain; its full sequence is Pseudouridine-5'-phosphate glycosidase (304 aa).

The active-site Proton donor is the Glu-25. 2 residues coordinate substrate: Lys-88 and Val-108. Asp-140 lines the Mn(2+) pocket. 142–144 contacts substrate; it reads SAD. Residue Lys-161 is the Nucleophile of the active site.

Belongs to the pseudouridine-5'-phosphate glycosidase family. In terms of assembly, homotrimer. The cofactor is Mn(2+).

It carries out the reaction D-ribose 5-phosphate + uracil = psi-UMP + H2O. Its function is as follows. Catalyzes the reversible cleavage of pseudouridine 5'-phosphate (PsiMP) to ribose 5-phosphate and uracil. Functions biologically in the cleavage direction, as part of a pseudouridine degradation pathway. This chain is Pseudouridine-5'-phosphate glycosidase, found in Paracoccus denitrificans (strain Pd 1222).